The chain runs to 186 residues: Threonylcarbamoyl-AMP synthase (186 aa).

Residues 5–186 (TQSINDAVKC…DAITGEILRL (182 aa)) form the YrdC-like domain.

This sequence belongs to the SUA5 family. TsaC subfamily.

It is found in the cytoplasm. The enzyme catalyses L-threonine + hydrogencarbonate + ATP = L-threonylcarbamoyladenylate + diphosphate + H2O. Its function is as follows. Required for the formation of a threonylcarbamoyl group on adenosine at position 37 (t(6)A37) in tRNAs that read codons beginning with adenine. Catalyzes the conversion of L-threonine, HCO(3)(-)/CO(2) and ATP to give threonylcarbamoyl-AMP (TC-AMP) as the acyladenylate intermediate, with the release of diphosphate. This is Threonylcarbamoyl-AMP synthase from Coxiella burnetii (strain RSA 493 / Nine Mile phase I).